The chain runs to 420 residues: Probable pectate lyase C (420 aa).

The N-terminal stretch at 1-20 is a signal peptide; it reads MKLSAPLLVSLAAFSQAVTA. 3 N-linked (GlcNAc...) asparagine glycosylation sites follow: asparagine 49, asparagine 165, and asparagine 202. Arginine 205 is a catalytic residue. The EF-hand domain maps to 262-297; the sequence is NANFHGYVDNNYYDPDKDGQLDGSELGVSSSNYGGM. Positions 275, 277, 279, 281, and 286 each coordinate Ca(2+). The disordered stretch occupies residues 357–395; that stretch reads ATMGGPGTLNGGTPAKDTDGDGIPDEAEKQLGTDPNTND. Asparagine 394 is a glycosylation site (N-linked (GlcNAc...) asparagine).

It belongs to the polysaccharide lyase 1 family. Ca(2+) is required as a cofactor.

The protein localises to the secreted. The catalysed reaction is Eliminative cleavage of (1-&gt;4)-alpha-D-galacturonan to give oligosaccharides with 4-deoxy-alpha-D-galact-4-enuronosyl groups at their non-reducing ends.. Its function is as follows. Pectinolytic enzyme consist of four classes of enzymes: pectin lyase, polygalacturonase, pectin methylesterase and rhamnogalacturonase. Among pectinolytic enzymes, pectin lyase is the most important in depolymerization of pectin, since it cleaves internal glycosidic bonds of highly methylated pectins. Favors pectate, the anion, over pectin, the methyl ester. In Neosartorya fischeri (strain ATCC 1020 / DSM 3700 / CBS 544.65 / FGSC A1164 / JCM 1740 / NRRL 181 / WB 181) (Aspergillus fischerianus), this protein is Probable pectate lyase C (plyC).